A 46-amino-acid chain; its full sequence is KTCEHLADTYRGVCFTNASCDDHCKNKAHLISGTCHNWKCFCTQNC.

4 disulfide bridges follow: Cys-3/Cys-46, Cys-14/Cys-35, Cys-20/Cys-40, and Cys-24/Cys-42.

Belongs to the DEFL family. In terms of tissue distribution, epidermis and vascular bundles of pods, stems, roots, leaves and wet or dry seeds.

Possesses antifungal activity sensitive to inorganic cations. This is Defensin-1 from Pisum sativum (Garden pea).